A 507-amino-acid chain; its full sequence is Glycogen synthase (507 aa).

Lysine 15 lines the ADP-alpha-D-glucose pocket.

This sequence belongs to the glycosyltransferase 1 family. Bacterial/plant glycogen synthase subfamily.

The catalysed reaction is [(1-&gt;4)-alpha-D-glucosyl](n) + ADP-alpha-D-glucose = [(1-&gt;4)-alpha-D-glucosyl](n+1) + ADP + H(+). It functions in the pathway glycan biosynthesis; glycogen biosynthesis. Its function is as follows. Synthesizes alpha-1,4-glucan chains using ADP-glucose. The sequence is that of Glycogen synthase from Rhodopirellula baltica (strain DSM 10527 / NCIMB 13988 / SH1).